Consider the following 288-residue polypeptide: N-acetylneuraminate lyase (288 aa).

Positions 44 and 45 each coordinate aceneuramate. The Proton donor role is filled by Tyr133. Lys161 (schiff-base intermediate with substrate) is an active-site residue. Thr163, Gly185, Asp187, Glu188, and Ser204 together coordinate aceneuramate.

Belongs to the DapA family. NanA subfamily. In terms of assembly, homotetramer.

It is found in the cytoplasm. The enzyme catalyses aceneuramate = aldehydo-N-acetyl-D-mannosamine + pyruvate. Its pathway is amino-sugar metabolism; N-acetylneuraminate degradation; D-fructose 6-phosphate from N-acetylneuraminate: step 1/5. Functionally, catalyzes the reversible aldol cleavage of N-acetylneuraminic acid (sialic acid; Neu5Ac) to form pyruvate and N-acetylmannosamine (ManNAc) via a Schiff base intermediate. The chain is N-acetylneuraminate lyase from Clostridium perfringens (strain ATCC 13124 / DSM 756 / JCM 1290 / NCIMB 6125 / NCTC 8237 / Type A).